The primary structure comprises 390 residues: UDP-galactose translocator (390 aa).

The interval 1 to 24 (MAAVGVGGSTAAAGAGAVSSGALE) is disordered. 10 consecutive transmembrane segments (helical) span residues 3 to 23 (AVGVGGSTAAAGAGAVSSGAL), 37 to 57 (YISLAVLVVQNASLILSIRYA), 65 to 85 (FFATTAVVMAEVLKGLTCLLL), 97 to 117 (LVLFLHEAVLVQYVDTLKLAV), 140 to 160 (TFQVTYQLKILTTALFSVLML), 169 to 189 (WASLLLLFTGVAIVQAQQAGG), 200 to 220 (GAGLAAVVASCLSSGFAGVYF), 238 to 258 (LGLFGTALGLVGLWWAEGTAV), 269 to 289 (PAVWGVVLNQAFGGLLVAVVV), and 315 to 335 (LFGFHLDPLFALGAGLVIGAV). Low complexity predominate over residues 9 to 22 (STAAAGAGAVSSGA). Residues 356–390 (PCIHQQPPGQPPPPQLSSRGDLTTEPFLPKSVLVK) are disordered.

Belongs to the nucleotide-sugar transporter family. SLC35A subfamily. Interacts with SLC35A3; the interaction is reduced in the presence of SLC35A4. Found in a complex with SLC35A3 and SLC35A4.

The protein resides in the golgi apparatus membrane. The enzyme catalyses UMP(out) + UDP-alpha-D-galactose(in) = UMP(in) + UDP-alpha-D-galactose(out). It carries out the reaction UDP-N-acetyl-alpha-D-galactosamine(in) + UMP(out) = UDP-N-acetyl-alpha-D-galactosamine(out) + UMP(in). It catalyses the reaction UMP(out) + UDP-alpha-D-glucose(in) = UMP(in) + UDP-alpha-D-glucose(out). The catalysed reaction is UMP(out) + UDP-N-acetyl-alpha-D-glucosamine(in) = UMP(in) + UDP-N-acetyl-alpha-D-glucosamine(out). The enzyme catalyses UDP-alpha-D-galactose(in) + AMP(out) = UDP-alpha-D-galactose(out) + AMP(in). It carries out the reaction UDP-alpha-D-galactose(in) + CMP(out) = UDP-alpha-D-galactose(out) + CMP(in). It catalyses the reaction UDP-N-acetyl-alpha-D-galactosamine(out) + UDP-alpha-D-galactose(in) = UDP-N-acetyl-alpha-D-galactosamine(in) + UDP-alpha-D-galactose(out). The catalysed reaction is UDP-N-acetyl-alpha-D-glucosamine(out) + UDP-alpha-D-galactose(in) = UDP-N-acetyl-alpha-D-glucosamine(in) + UDP-alpha-D-galactose(out). The enzyme catalyses UDP-alpha-D-galactose(in) + UDP-alpha-D-glucose(out) = UDP-alpha-D-galactose(out) + UDP-alpha-D-glucose(in). It carries out the reaction UMP(out) + CMP(in) = UMP(in) + CMP(out). It catalyses the reaction UMP(out) + AMP(in) = UMP(in) + AMP(out). Its function is as follows. Transports uridine diphosphate galactose (UDP-galactose) from the cytosol into the Golgi apparatus. It functions as an antiporter that exchanges UDP-galactose for UMP. It is also able to exchange UDP-galactose for AMP and CMP, and to transport UDP-N-acetylgalactosamine (UDP-GalNAc) and other nucleotide sugars. As a provider of UDP-galactose to galactosyltransferases present in the Golgi apparatus, it is necessary for globotriaosylceramide/globoside (Gb3Cer) synthesis from lactosylceramide. The sequence is that of UDP-galactose translocator from Mus musculus (Mouse).